Consider the following 174-residue polypeptide: Peptide methionine sulfoxide reductase MsrA (174 aa).

The active site involves C11.

The protein belongs to the MsrA Met sulfoxide reductase family.

It catalyses the reaction L-methionyl-[protein] + [thioredoxin]-disulfide + H2O = L-methionyl-(S)-S-oxide-[protein] + [thioredoxin]-dithiol. The catalysed reaction is [thioredoxin]-disulfide + L-methionine + H2O = L-methionine (S)-S-oxide + [thioredoxin]-dithiol. Functionally, has an important function as a repair enzyme for proteins that have been inactivated by oxidation. Catalyzes the reversible oxidation-reduction of methionine sulfoxide in proteins to methionine. The chain is Peptide methionine sulfoxide reductase MsrA from Pasteurella multocida (strain Pm70).